Consider the following 668-residue polypeptide: MEQGPQDGEPIEIKIIKEAYKKAFVFVNKGLNTDELGQKEEAKNYYKQGIGHLLRGISISSTDPEYTGPEWESARQMQQKMKETLQNVRTRLEILEKGLATSLRNDLQEVPKLYPEFPPKDMSEKSPEPQSLSSLPQHSEVNGSTSTASAESSSTPTTLSLPCQSHPSEAPPAYTPQAAEGHYTVSYGTESGEFSSVGENFYRNHSQPPPLETLGLDADELILIPNGVQIFFVNPAGEVSAPSYPGYLRIVRFLDNSLDTFLNRPPGFLQVCDWLYPLVPDRSPVLKCTVGAYMFPDTMLQASGCFVGVVLSSELPEDDRELFEDLLRQMSDLRLQTNWDRAEGENEFQIPGISGSASDQLKEASGTDVRQLDPSSKDVRQKGKRGKKTKGTSSEEVNLSHIVPCEPVSEEKAKELPEWSEKVAHNILSGASWVSWGLVKGAEFTGKAIQKGASKLRERIQPEEKPVEVSPAVTKGLYMAKQATGGAAKVSQFLVDGVCTVANCVGKELAPHVKKHGSKLVPESLKKDRNGKSTLDGAMVVAASSVQGFSTVWQGLECAAKCIVNNVSAETVQTVRYKYGHTAGEATHNAVDSAINVGVTAYNIDNIGIKAMVKKTAKQTGHTLLEDYKIIDNSKGENPGGGASANLKGEKDEQKEGPEKNGAKKKDK.

Methionine 1 bears the N-acetylmethionine mark. Residues isoleucine 16–isoleucine 94 form the MIT domain. Positions valine 110 to proline 176 are disordered. Residues proline 118 to proline 127 are compositionally biased toward basic and acidic residues. A Phosphoserine modification is found at serine 126. Residues glutamate 128–proline 162 are compositionally biased toward low complexity. Residues glutamate 190 to arginine 380 are ubiquitin-binding region (UBR) domain. The LC3-interacting region (LIR); mediates interaction with MAP1LC3A AND MAP1LC3C motif lies at glutamate 193–asparagine 200. The segment at phenylalanine 348–glutamate 396 is disordered. Lysine 362 participates in a covalent cross-link: Glycyl lysine isopeptide (Lys-Gly) (interchain with G-Cter in ubiquitin). Positions isoleucine 427–alanine 611 constitute a Senescence domain. The tract at residues alanine 431–asparagine 503 is required for localization to lipid droplets. Serine 470 carries the post-translational modification Phosphoserine. Positions isoleucine 631–lysine 668 are disordered. Positions lysine 648–lysine 668 are enriched in basic and acidic residues.

Interacts with ITCH and WWP1. Interacts (via MIT domain) with IST1; leading to the recruitment of SPART to midbodies. Interacts with MAP1LC3A and MAP1LC3C. Post-translationally, ubiquitinated; ubiquitination does not require ITCH and WWP1.

The protein localises to the cytoplasm. It is found in the midbody. It localises to the lipid droplet. In terms of biological role, lipophagy receptor that plays an important role in lipid droplet (LD) turnover in motor neurons. Localizes to LDs and interacts with components of the autophagy machinery, such as MAP1LC3A/C proteins to deliver LDs to autophagosomes for degradation via lipophagy. Lipid transfer protein required for lipid droplet degradation, including by lipophagy. Can bind and transfer all lipid species found in lipid droplets, from phospholipids to triglycerides and sterol esters but the direction of lipid transfer by spartin and its cargos are unknown. May be implicated in endosomal trafficking, or microtubule dynamics, or both. Participates in cytokinesis. The polypeptide is Spartin (Bos taurus (Bovine)).